The sequence spans 152 residues: Atypical leghemoglobin 2-1 (152 aa).

The 150-residue stretch at 3–152 (TFSEEQEALV…LAGVIKKGMS (150 aa)) folds into the Globin domain. Tyr-31 bears the Nitrated tyrosine mark. Heme b is bound at residue Ser-46. Ser-46 is modified (phosphoserine). O2 is bound at residue His-64. Lys-67, His-99, and Arg-102 together coordinate heme b. At Tyr-140 the chain carries Nitrated tyrosine.

This sequence belongs to the plant globin family. Monomer. In terms of processing, nitrated in effective nodules and particularly in hypoxic conditions; this mechanism may play a protective role in the symbiosis by buffering toxic peroxynitrite NO(2)(-). Nitration level decrease during nodule senescence. Phosphorylation at Ser-46 disrupts the molecular environment of its porphyrin ring oxygen binding pocket, thus leading to a reduced oxygen consumption and to the delivery of oxygen O(2) to symbiosomes. In terms of tissue distribution, mainly expressed in leaves and, at low levels, in roots of non-nodulated plants. However, accumulates also in nodules and roots, and, to a lower extent, in leaves, stems, flowers and fruits, in nodulated plants.

Atypical leghemoglobin that reversibly binds oxygen O(2) through a pentacoordinated heme iron. In nodules, facilitates the diffusion of oxygen to the bacteroids while preventing the bacterial nitrogenase from being inactivated by buffering dioxygen, nitric oxide and carbon monoxide. This role is essential for symbiotic nitrogen fixation (SNF). Seems not restricted to symbiotic nitrogen fixation and root nodules formation, but also contributes to general plant development and metabolism. The chain is Atypical leghemoglobin 2-1 from Lotus japonicus (Lotus corniculatus var. japonicus).